A 504-amino-acid chain; its full sequence is uncharacterized protein (504 aa).

This sequence to M.thermoautotrophicum MTH1137.

This is an uncharacterized protein from Methanocaldococcus jannaschii (strain ATCC 43067 / DSM 2661 / JAL-1 / JCM 10045 / NBRC 100440) (Methanococcus jannaschii).